Here is a 338-residue protein sequence, read N- to C-terminus: D-erythrose-4-phosphate dehydrogenase (338 aa).

NAD(+) is bound at residue 12–13 (RI). Residues 154-156 (SCT), Arg-200, 213-214 (TK), and Arg-236 each bind substrate. Cys-155 (nucleophile) is an active-site residue. Asn-318 provides a ligand contact to NAD(+).

The protein belongs to the glyceraldehyde-3-phosphate dehydrogenase family. Epd subfamily. Homotetramer.

The protein localises to the cytoplasm. It catalyses the reaction D-erythrose 4-phosphate + NAD(+) + H2O = 4-phospho-D-erythronate + NADH + 2 H(+). The protein operates within cofactor biosynthesis; pyridoxine 5'-phosphate biosynthesis; pyridoxine 5'-phosphate from D-erythrose 4-phosphate: step 1/5. Its function is as follows. Catalyzes the NAD-dependent conversion of D-erythrose 4-phosphate to 4-phosphoerythronate. The polypeptide is D-erythrose-4-phosphate dehydrogenase (Tolumonas auensis (strain DSM 9187 / NBRC 110442 / TA 4)).